A 638-amino-acid chain; its full sequence is Nitrous-oxide reductase (638 aa).

The tat-type signal signal peptide spans methionine 1–alanine 52. 3 residues coordinate Cu cation: histidine 129, histidine 130, and histidine 178. Residues tyrosine 256, glutamate 259, methionine 267, aspartate 273, and asparagine 324 each contribute to the Ca(2+) site. The Cu cation site is built by histidine 326, histidine 382, and histidine 433. The Ca(2+) site is built by lysine 454 and glutamate 469. Cu cation is bound by residues histidine 494, histidine 583, cysteine 618, tryptophan 620, cysteine 622, histidine 626, and methionine 629. The tract at residues asparagine 542 to alanine 638 is COX2-like.

This sequence belongs to the NosZ family. It in the C-terminal section; belongs to the cytochrome c oxidase subunit 2 family. As to quaternary structure, homodimer. Requires Ca(2+) as cofactor. Cu cation is required as a cofactor. Predicted to be exported by the Tat system. The position of the signal peptide cleavage has not been experimentally proven. Post-translationally, the N-terminus is blocked.

It is found in the periplasm. The enzyme catalyses N2 + 2 Fe(III)-[cytochrome c] + H2O = nitrous oxide + 2 Fe(II)-[cytochrome c] + 2 H(+). The protein operates within nitrogen metabolism; nitrate reduction (denitrification); dinitrogen from nitrate: step 4/4. Nitrous-oxide reductase is part of a bacterial respiratory system which is activated under anaerobic conditions in the presence of nitrate or nitrous oxide. The chain is Nitrous-oxide reductase (nosZ) from Stutzerimonas stutzeri (Pseudomonas stutzeri).